Consider the following 194-residue polypeptide: Imidazoleglycerol-phosphate dehydratase (194 aa).

The protein belongs to the imidazoleglycerol-phosphate dehydratase family.

Its subcellular location is the cytoplasm. It carries out the reaction D-erythro-1-(imidazol-4-yl)glycerol 3-phosphate = 3-(imidazol-4-yl)-2-oxopropyl phosphate + H2O. The protein operates within amino-acid biosynthesis; L-histidine biosynthesis; L-histidine from 5-phospho-alpha-D-ribose 1-diphosphate: step 6/9. The chain is Imidazoleglycerol-phosphate dehydratase from Streptococcus gordonii (strain Challis / ATCC 35105 / BCRC 15272 / CH1 / DL1 / V288).